A 183-amino-acid polypeptide reads, in one-letter code: ATP synthase subunit delta (183 aa).

The protein belongs to the ATPase delta chain family. F-type ATPases have 2 components, F(1) - the catalytic core - and F(0) - the membrane proton channel. F(1) has five subunits: alpha(3), beta(3), gamma(1), delta(1), epsilon(1). F(0) has three main subunits: a(1), b(2) and c(10-14). The alpha and beta chains form an alternating ring which encloses part of the gamma chain. F(1) is attached to F(0) by a central stalk formed by the gamma and epsilon chains, while a peripheral stalk is formed by the delta and b chains.

The protein localises to the cell inner membrane. Its function is as follows. F(1)F(0) ATP synthase produces ATP from ADP in the presence of a proton or sodium gradient. F-type ATPases consist of two structural domains, F(1) containing the extramembraneous catalytic core and F(0) containing the membrane proton channel, linked together by a central stalk and a peripheral stalk. During catalysis, ATP synthesis in the catalytic domain of F(1) is coupled via a rotary mechanism of the central stalk subunits to proton translocation. In terms of biological role, this protein is part of the stalk that links CF(0) to CF(1). It either transmits conformational changes from CF(0) to CF(1) or is implicated in proton conduction. This is ATP synthase subunit delta from Vesicomyosocius okutanii subsp. Calyptogena okutanii (strain HA).